Reading from the N-terminus, the 963-residue chain is Iron-responsive element-binding protein 2 (963 aa).

Positions 512, 578, and 581 each coordinate [4Fe-4S] cluster.

The protein belongs to the aconitase/IPM isomerase family. Interacts with RBCK1 only in iron-rich conditions. Interacts (when associated with the 4Fe-4S) with FBXL5. Interacts with CIAO1 and CIAO2A. It depends on [4Fe-4S] cluster as a cofactor. In terms of processing, ubiquitinated and degraded by the proteasome in presence of high level of iron and oxygen. Ubiquitinated by a SCF complex containing FBXL5. Upon iron and oxygen depletion FBXL5 is degraded, preventing ubiquitination and allowing its RNA-binding activity.

Its subcellular location is the cytoplasm. RNA-binding protein that binds to iron-responsive elements (IRES), which are stem-loop structures found in the 5'-UTR of ferritin, and delta aminolevulinic acid synthase mRNAs, and in the 3'-UTR of transferrin receptor mRNA. Binding to the IRE element in ferritin results in the repression of its mRNA translation. Binding of the protein to the transferrin receptor mRNA inhibits the degradation of this otherwise rapidly degraded mRNA. This is Iron-responsive element-binding protein 2 (Ireb2) from Mus musculus (Mouse).